A 303-amino-acid chain; its full sequence is Serine/threonine-protein phosphatase PP-X homolog 1 (303 aa).

Positions 51, 53, 79, and 111 each coordinate Mn(2+). H112 functions as the Proton donor in the catalytic mechanism. Mn(2+) is bound by residues H161 and H235.

The protein belongs to the PPP phosphatase family. PP-4 (PP-X) subfamily. Requires Mn(2+) as cofactor.

The catalysed reaction is O-phospho-L-seryl-[protein] + H2O = L-seryl-[protein] + phosphate. It catalyses the reaction O-phospho-L-threonyl-[protein] + H2O = L-threonyl-[protein] + phosphate. The chain is Serine/threonine-protein phosphatase PP-X homolog 1 (Ppx1) from Paramecium tetraurelia.